We begin with the raw amino-acid sequence, 337 residues long: Fructose-1,6-bisphosphatase class 1 (337 aa).

Mg(2+) contacts are provided by E94, D116, L118, and D119. Substrate-binding positions include 119 to 122 (DGSS), N210, and K276. Residue E282 coordinates Mg(2+).

It belongs to the FBPase class 1 family. Homotetramer. Requires Mg(2+) as cofactor.

It is found in the cytoplasm. The enzyme catalyses beta-D-fructose 1,6-bisphosphate + H2O = beta-D-fructose 6-phosphate + phosphate. It participates in carbohydrate biosynthesis; gluconeogenesis. The polypeptide is Fructose-1,6-bisphosphatase class 1 (Burkholderia orbicola (strain MC0-3)).